Consider the following 386-residue polypeptide: SET and MYND domain-containing protein DDB_G0273589 (386 aa).

Positions 6–294 (NGLELKSSEN…KGDQLTISYI (289 aa)) constitute an SET domain. Residues 51–94 (CFNCIKQLPSVIKLSLKCNQCNEIWYCNEQCKNENINKHQHYEC) form an MYND-type zinc finger. A coiled-coil region spans residues 136-171 (NNKFIEQQLNNNNNNNNDNEQLTNTLDDVFDLVENQ).

It belongs to the class V-like SAM-binding methyltransferase superfamily.

In terms of biological role, probable methyltransferase. In Dictyostelium discoideum (Social amoeba), this protein is SET and MYND domain-containing protein DDB_G0273589.